The following is a 193-amino-acid chain: Dual-action ribosomal maturation protein DarP (193 aa).

Positions 1 to 10 (MRGRDEDTGE) are enriched in basic and acidic residues. Disordered stretches follow at residues 1–20 (MRGR…SQQR) and 170–193 (SQKP…ENDE). The span at 181-193 (GLEDEESASENDE) shows a compositional bias: acidic residues.

Belongs to the DarP family.

The protein resides in the cytoplasm. Member of a network of 50S ribosomal subunit biogenesis factors which assembles along the 30S-50S interface, preventing incorrect 23S rRNA structures from forming. Promotes peptidyl transferase center (PTC) maturation. The sequence is that of Dual-action ribosomal maturation protein DarP from Xanthomonas campestris pv. campestris (strain 8004).